Consider the following 671-residue polypeptide: DNA ligase (671 aa).

Residues 32-36 (DAEYD), 81-82 (SL), and Glu-113 each bind NAD(+). Lys-115 (N6-AMP-lysine intermediate) is an active-site residue. Residues Arg-136, Glu-173, Lys-290, and Lys-314 each coordinate NAD(+). Cys-408, Cys-411, Cys-426, and Cys-432 together coordinate Zn(2+). The BRCT domain maps to 593–671 (EIDSPFAGKT…EAEMMRLLGE (79 aa)).

Belongs to the NAD-dependent DNA ligase family. LigA subfamily. Requires Mg(2+) as cofactor. Mn(2+) serves as cofactor.

It catalyses the reaction NAD(+) + (deoxyribonucleotide)n-3'-hydroxyl + 5'-phospho-(deoxyribonucleotide)m = (deoxyribonucleotide)n+m + AMP + beta-nicotinamide D-nucleotide.. Its function is as follows. DNA ligase that catalyzes the formation of phosphodiester linkages between 5'-phosphoryl and 3'-hydroxyl groups in double-stranded DNA using NAD as a coenzyme and as the energy source for the reaction. It is essential for DNA replication and repair of damaged DNA. The sequence is that of DNA ligase from Klebsiella pneumoniae subsp. pneumoniae (strain ATCC 700721 / MGH 78578).